The sequence spans 359 residues: Protein Wnt-5b (359 aa).

The signal sequence occupies residues 1 to 17; the sequence is MPSLLLLFTAALLSSWA. Cysteines 83 and 94 form a disulfide. 2 N-linked (GlcNAc...) asparagine glycosylation sites follow: Asn-93 and Asn-99. Cystine bridges form between Cys-133/Cys-141, Cys-143/Cys-161, Cys-217/Cys-231, Cys-219/Cys-226, Cys-288/Cys-319, Cys-304/Cys-314, Cys-318/Cys-358, Cys-334/Cys-349, Cys-336/Cys-346, and Cys-341/Cys-342. The O-palmitoleoyl serine; by PORCN moiety is linked to residue Ser-223. N-linked (GlcNAc...) asparagine glycosylation is found at Asn-291 and Asn-305.

The protein belongs to the Wnt family. As to quaternary structure, interacts with PORCN. Palmitoleoylation is required for efficient binding to frizzled receptors. Depalmitoleoylation leads to Wnt signaling pathway inhibition.

Its subcellular location is the secreted. The protein resides in the extracellular space. It localises to the extracellular matrix. Ligand for members of the frizzled family of seven transmembrane receptors. Probable developmental protein. May be a signaling molecule which affects the development of discrete regions of tissues. Is likely to signal over only few cell diameters. The protein is Protein Wnt-5b (WNT5B) of Pongo abelii (Sumatran orangutan).